A 304-amino-acid polypeptide reads, in one-letter code: MSWIERILNKSNITQTRKASIPEGVWTKCDSCGQVLYRAELERNLEVCPKCDHHMRMSARARLHMLLDAGSEVELGSELEPKDILKFRDSKKYKDRISAAQKDTGEKDALVAMKGTLQGMPIVAASFEFAFMGGSMASVVGARFVRAVEQALEDNCPLVCFSSSGGARMQEALMSLMQMAKTSAALAKMQERGLPYISVLTDPTMGGVSASLAMLGDINIAEPKALIGFAGPRVIEQTVREKLPPGFQRSEFLIEKGAIDIIVRRPVMRQTLASILSKLTHQPQPSVVESKADTVAQPENQADV.

One can recognise a CoA carboxyltransferase N-terminal domain in the interval 25–294 (VWTKCDSCGQ…PSVVESKADT (270 aa)). Cysteine 29, cysteine 32, cysteine 48, and cysteine 51 together coordinate Zn(2+). The C4-type zinc-finger motif lies at 29–51 (CDSCGQVLYRAELERNLEVCPKC).

The protein belongs to the AccD/PCCB family. As to quaternary structure, acetyl-CoA carboxylase is a heterohexamer composed of biotin carboxyl carrier protein (AccB), biotin carboxylase (AccC) and two subunits each of ACCase subunit alpha (AccA) and ACCase subunit beta (AccD). Zn(2+) serves as cofactor.

Its subcellular location is the cytoplasm. The enzyme catalyses N(6)-carboxybiotinyl-L-lysyl-[protein] + acetyl-CoA = N(6)-biotinyl-L-lysyl-[protein] + malonyl-CoA. The protein operates within lipid metabolism; malonyl-CoA biosynthesis; malonyl-CoA from acetyl-CoA: step 1/1. Its function is as follows. Component of the acetyl coenzyme A carboxylase (ACC) complex. Biotin carboxylase (BC) catalyzes the carboxylation of biotin on its carrier protein (BCCP) and then the CO(2) group is transferred by the transcarboxylase to acetyl-CoA to form malonyl-CoA. The chain is Acetyl-coenzyme A carboxylase carboxyl transferase subunit beta from Yersinia pestis bv. Antiqua (strain Nepal516).